A 284-amino-acid polypeptide reads, in one-letter code: MEMO1 family protein STK_20620 (284 aa).

It belongs to the MEMO1 family.

This is MEMO1 family protein STK_20620 from Sulfurisphaera tokodaii (strain DSM 16993 / JCM 10545 / NBRC 100140 / 7) (Sulfolobus tokodaii).